Here is a 67-residue protein sequence, read N- to C-terminus: Small ribosomal subunit protein bS21 (67 aa).

This sequence belongs to the bacterial ribosomal protein bS21 family.

The polypeptide is Small ribosomal subunit protein bS21 (rpsU) (Aquifex aeolicus (strain VF5)).